The primary structure comprises 144 residues: C-type isolectin Sp-CL4 (144 aa).

The region spanning 27-144 (DENRKVKYFE…CSEKLPFMCA (118 aa)) is the C-type lectin domain. 2 cysteine pairs are disulfide-bonded: Cys-48-Cys-143 and Cys-119-Cys-135.

Belongs to the true venom lectin family. Glycosylated with a carbohydrate of 383 Da. As to expression, expressed by the venom gland.

It is found in the secreted. Its function is as follows. The role of this hemagglutinin in the venom is unknown, because it is masked by the high venom hemolytic activity. Lectin with specificity to galactose. Induces hemagglutination. The protein is C-type isolectin Sp-CL4 of Scorpaena plumieri (Spotted scorpionfish).